We begin with the raw amino-acid sequence, 484 residues long: MEKFHAQYEMLETIGQGGCAKVKLARHRLTGTHVAVKMIPKREYWCKLLMFEAELLMMFNHPNIISLLQVIETKKKVYLIMELCEGKSLYQHIQNAGYLQEDEARPLFKQLLSAMNYCHNQGIVHRDLTPDNIMVEKDGRVKNIDFGLSTHVKPGQKLNLFCGTYPFSAPEVLLSRPYGGPKIDVWTLGVVLYFMVIGKIPFDAASIEKLRKQIVAGKYSAPCRLSVKLQHLINLLMTDNPELRPTVAEVMVHPWITKGSGVFPDPCEEQIPLKPDPAIVKPMGHIGFQAQDIEDSLRQRKFNETMASYCLLKKQILKECDRPIRDQPMNPSVTPFPSLVDTPTFHLGLRRRETEPTGLRLSANRQVSVCGKSTSKKRDRSFIWPGVLSRPINTTPTMDQTHTRTRSVPCIYSNVCTIHPNSIDESTEGHTSASAEDKPVHSRGWPRGIKGWTRKIGNAMRKLCCCIPSKETSHLGQSRVCPKK.

One can recognise a Protein kinase domain in the interval 8-256 (YEMLETIGQG…VAEVMVHPWI (249 aa)). ATP-binding positions include 14-22 (IGQGGCAKV) and K37. The Proton acceptor role is filled by D127. A UBA domain is found at 274-314 (KPDPAIVKPMGHIGFQAQDIEDSLRQRKFNETMASYCLLKK). Residues 423 to 434 (IDESTEGHTSAS) show a composition bias toward polar residues. Residues 423 to 447 (IDESTEGHTSASAEDKPVHSRGWPR) are disordered.

The protein belongs to the protein kinase superfamily. Tyr protein kinase family. Smok subfamily. As to expression, testis-specific. Expressed in the testis from 22 days postpartum (22 dpp).

The catalysed reaction is L-seryl-[protein] + ATP = O-phospho-L-seryl-[protein] + ADP + H(+). It carries out the reaction L-threonyl-[protein] + ATP = O-phospho-L-threonyl-[protein] + ADP + H(+). May play a role in sperm motility, especially in the regulation of flagellar function. In Mus musculus (Mouse), this protein is Sperm motility kinase 1 (Smok1).